Here is a 90-residue protein sequence, read N- to C-terminus: Small ribosomal subunit protein bS20 (90 aa).

The segment covering 1-11 (MANIKSSEKDI) has biased composition (basic and acidic residues). Residues 1–29 (MANIKSSEKDIRRTKRRNAANSQNRSRLR) form a disordered region.

Belongs to the bacterial ribosomal protein bS20 family.

Binds directly to 16S ribosomal RNA. The protein is Small ribosomal subunit protein bS20 of Leptospira borgpetersenii serovar Hardjo-bovis (strain JB197).